The primary structure comprises 329 residues: GTPase Obg (329 aa).

Residues 1–159 (MQFIDQARIT…WFLQLELKLL (159 aa)) form the Obg domain. One can recognise an OBG-type G domain in the interval 160–328 (AEVGIIGLPN…LLAQVWKELG (169 aa)). ATP-binding positions include 166-173 (GLPNAGKS), 191-195 (FTTLV), 213-216 (DIPG), 280-283 (NKQE), and 309-311 (SAA). Residues Ser173 and Thr193 each coordinate Mg(2+).

Belongs to the TRAFAC class OBG-HflX-like GTPase superfamily. OBG GTPase family. In terms of assembly, monomer. Mg(2+) serves as cofactor.

The protein resides in the cytoplasm. In terms of biological role, an essential GTPase which binds GTP, GDP and possibly (p)ppGpp with moderate affinity, with high nucleotide exchange rates and a fairly low GTP hydrolysis rate. Plays a role in control of the cell cycle, stress response, ribosome biogenesis and in those bacteria that undergo differentiation, in morphogenesis control. The sequence is that of GTPase Obg from Prochlorococcus marinus (strain MIT 9303).